Consider the following 1415-residue polypeptide: MPSSLLLATRNQILSMMNCWFSCAPKNRHAADWNKYDDRLMKAAERGDVEKVSSILAKKGINPGKLDVEGRSAFHVVASKGNLECLNAILIHGVDITTSDTAGRNALHLAAKYGHALCLQKLLQYNCPTEHADLQGRTALHDAAMADCPSSIQLLCDHGASVNAKDVDGRTPLVLATQMCRPAICQLLIDRGAEINSRDKQNRTALMLGCEYGCKDAVEVLLKNGADVSLLDALGHDSSYYARIGDNLDILTLLKTASENTNKGRELWKKGPSLQQRNLPYMLDEVNVKSSQREHRNIQELEIENEDLKDRLRKIQQEQRILLDKVNGLQLQLNEEVMVADDLESEKEKLKSLLVAKEKQHEESLRTIESLKNRFKYFESDHLGSGSHFSNRKEDMLLKQGQMYMTCTSPGVPAHMQSRSMLRPLELSLPNQTSYSENDLLKKELEAMRTFCESAKQDRLKLQNELAHKVAECKALGLECERIKEDSDEQIKQLEDALKDVQKRMYESEGKVKQMQTHFLALKEHLTSEAAIGNHRLMEELKDQLKDMKAKYEGASAEVGKLRNQIKQNELLVEQFRRDEGKLVEENKRLQKELSMCETERDKKGRRVAEVEGQVKELLAKLTLSVPTEKFESMKSLLSSEVNEKVKKIGETEREYEKSLTEIRQLRRELENCKAKLAQHVKPEEHEQLKSRLEQRAGELAKKVTELTSKNQVLQRDVEKVYLDNKLLNQQVHNLTSEIKSHYVPLQVSEEMKKSHDVTVEELKKQLLDVTQKCADKQLEMEKLLLENDSLSKNVSRLETVFVPPEKHQKEVTALKSSVADLKRQLLELNKKCGEDREKINALVSENTSLKKTLSNQYVPAKTHEEVKTALSGTLDKTNRELLDAKKKWEDLNQEFVKTKDENEILKRNLENTQSQIKAEYISLREHEEKMSAINQNMKSVQDNSAEILANYRKGQEEIVTLHAEIEAQKKELDTIQECIKLKYAPIISFEECERKFKATEKELKEQLSEQMQKYHVREEEAKKYKQENDKLKKEIFTLQKDLKDKNVLIENSHDMERALNRKAEELNKQLKDLLQKYSEIKTEKEKLVDDNARQTSELLAAQTLLQKQHVPLEQVETLKKSLNSTIEHLKEELKNKQKCYEKEQQTVAKLHQMLENQKNSSVPLGEHLRVKEAFEKEVGMIKASLREKEEESQNKTEEVSKLQSEVQDTKQALQKLETREVVDLSKYKATKSDLETQISNLNEKLANLNRKYEEACEEVLRAQRKQLSAKDEKELLHFSIEQEIKDQQERCDKSLTTITELQKRIQESAKQIEAKDNKITELLNDVERLKQALSGLSQLTSPSGSPSKRQSQLIDTLQHQVKSLQQQLADTDRQHQEVIAIYRTHLLSAAQGHMDEDVQAALLQIIQMRQGLVC.

ANK repeat units follow at residues E69–T98, A102–H131, Q135–A164, D168–S197, and Q201–L230. Residues V288–K376 are a coiled coil. The ANK 6 repeat unit spans residues E617–V646. The stretch at T759–A1381 forms a coiled coil. K1034 participates in a covalent cross-link: Glycyl lysine isopeptide (Lys-Gly) (interchain with G-Cter in SUMO2). Over residues L1186–S1201 the composition is skewed to basic and acidic residues. Residues L1186 to S1205 form a disordered region.

In terms of assembly, component of the apoptosome complex, composed of APAF1, pro-caspase-9 and UACA. In the complex, it probably interacts directly with APAF1. Interacts with LGALS3, ARF6 and ACTB. Interacts with RAB39A. In terms of tissue distribution, highly expressed in adrenal, testis, kidney and large intestine.

It is found in the nucleus. The protein resides in the cytoplasm. It localises to the cytoskeleton. Regulates APAF1 expression and plays an important role in the regulation of stress-induced apoptosis. Promotes apoptosis by regulating three pathways, apoptosome up-regulation, LGALS3/galectin-3 down-regulation and NF-kappa-B inactivation. Regulates the redistribution of APAF1 into the nucleus after proapoptotic stress. Down-regulates the expression of LGALS3 by inhibiting NFKB1. Its function is as follows. Modulates isoactin dynamics to regulate the morphological alterations required for cell growth and motility. Interaction with ARF6 may modulate cell shape and motility after injury. May be involved in multiple neurite formation. In Canis lupus familiaris (Dog), this protein is Uveal autoantigen with coiled-coil domains and ankyrin repeats (UACA).